Here is a 350-residue protein sequence, read N- to C-terminus: Proton-activated chloride channel (350 aa).

Residues 1–51 (MEAIRKELSRSYQELNDETDPIARDPEGAQEEEQEEAASAVVPDRDSDRSN) are disordered. Over 1-63 (MEAIRKELSR…VHFSRTCLKN (63 aa)) the chain is Cytoplasmic. Residues 64 to 84 (VFSVLLIFVYLLLMGVAVFLV) form a helical membrane-spanning segment. The Extracellular segment spans residues 85–297 (YQTITDFRDK…KDPYIQEIQD (213 aa)). A helical transmembrane segment spans residues 298–318 (IITANPWSMIALLCSVFLVLF). The Cytoplasmic segment spans residues 319-350 (KAADFAKLSVKWMIKVRRRHLKKRTRELNHIS).

It belongs to the proton-activated chloride channel family.

The protein resides in the cell membrane. The enzyme catalyses chloride(in) = chloride(out). Chloride channel gated by pH that facilitates the entry of chloride ions into cells upon exposure to extracellular acidic pH. The chain is Proton-activated chloride channel from Xenopus laevis (African clawed frog).